We begin with the raw amino-acid sequence, 529 residues long: UDP-glucuronosyltransferase 2B28 (529 aa).

The N-terminal stretch at 1-24 (MALKWTSVLLLIHLGCYFSSGSCG) is a signal peptide. Position 135 is an N6-succinyllysine (K135). N315 carries N-linked (GlcNAc...) asparagine glycosylation. A helical transmembrane segment spans residues 495–517 (GFLLACVATVIFVVTKFCLFCFW).

It belongs to the UDP-glycosyltransferase family. As to expression, expressed in the liver, breast and kidney.

The protein localises to the endoplasmic reticulum membrane. The protein resides in the cytoplasm. It is found in the perinuclear region. The enzyme catalyses glucuronate acceptor + UDP-alpha-D-glucuronate = acceptor beta-D-glucuronoside + UDP + H(+). In terms of biological role, UDP-glucuronosyltransferase (UGT) that catalyzes phase II biotransformation reactions in which lipophilic substrates are conjugated with glucuronic acid to increase the metabolite's water solubility, thereby facilitating excretion into either the urine or bile. Essential for the elimination and detoxification of drugs, xenobiotics and endogenous compounds. Catalyzes the glucuronidation of endogenous steroid hormones such as androgens (androsterone, 3alpha-androstanediol) and estrogens (estradiol, estrone). Catalyzes the glucuronidation of bile acid substrates, which are natural detergents for dietary lipids absorption. Displays glucuronidation activity toward the phenolic compounds eugenol. Lack UDP-glucuronosyltransferase (UGT) activity. This Homo sapiens (Human) protein is UDP-glucuronosyltransferase 2B28.